The following is a 461-amino-acid chain: Trigger factor (461 aa).

The PPIase FKBP-type domain occupies 169–256 (GDTAVIDFAG…LKDLKIKELP (88 aa)). Residues 432-461 (PGEAIEPGSGEDAPPEVAAGATEPEAQPNS) form a disordered region.

It belongs to the FKBP-type PPIase family. Tig subfamily.

The protein localises to the cytoplasm. It carries out the reaction [protein]-peptidylproline (omega=180) = [protein]-peptidylproline (omega=0). Involved in protein export. Acts as a chaperone by maintaining the newly synthesized protein in an open conformation. Functions as a peptidyl-prolyl cis-trans isomerase. In Gloeobacter violaceus (strain ATCC 29082 / PCC 7421), this protein is Trigger factor.